The sequence spans 350 residues: Nicotinate-nucleotide--dimethylbenzimidazole phosphoribosyltransferase (350 aa).

Glu318 serves as the catalytic Proton acceptor.

The protein belongs to the CobT family.

The enzyme catalyses 5,6-dimethylbenzimidazole + nicotinate beta-D-ribonucleotide = alpha-ribazole 5'-phosphate + nicotinate + H(+). The protein operates within nucleoside biosynthesis; alpha-ribazole biosynthesis; alpha-ribazole from 5,6-dimethylbenzimidazole: step 1/2. Catalyzes the synthesis of alpha-ribazole-5'-phosphate from nicotinate mononucleotide (NAMN) and 5,6-dimethylbenzimidazole (DMB). The chain is Nicotinate-nucleotide--dimethylbenzimidazole phosphoribosyltransferase from Citrifermentans bemidjiense (strain ATCC BAA-1014 / DSM 16622 / JCM 12645 / Bem) (Geobacter bemidjiensis).